We begin with the raw amino-acid sequence, 429 residues long: C4-dicarboxylate transport protein (429 aa).

8 consecutive transmembrane segments (helical) span residues 3-23 (VSIF…GVLL), 44-64 (LIKM…IAGM), 76-96 (IALL…LVVV), 144-164 (AFAS…GFAL), 184-204 (VIFG…FGAM), 222-242 (LILC…GTIA), 331-351 (TLLV…GSGF), and 352-372 (IVLA…LALI).

Belongs to the dicarboxylate/amino acid:cation symporter (DAACS) (TC 2.A.23) family.

It localises to the cell inner membrane. In terms of biological role, responsible for the transport of dicarboxylates such as succinate, fumarate, and malate from the periplasm across the membrane. This is C4-dicarboxylate transport protein from Yersinia pseudotuberculosis serotype O:1b (strain IP 31758).